The sequence spans 494 residues: Neuronal acetylcholine receptor subunit alpha-6 (494 aa).

Residues 1–31 (MHPKRRLCWCLPASGAWAFMLTSLIADTTAC) form the signal peptide. Residues 32–240 (ESEERLFHKL…TYSFYIRRLP (209 aa)) lie on the Extracellular side of the membrane. Asn54 and Asn171 each carry an N-linked (GlcNAc...) asparagine glycan. A disulfide bridge connects residues Cys158 and Cys172. The next 3 helical transmembrane spans lie at 241 to 265 (MFYT…FYLP), 272 to 290 (VTLC…LVIT), and 306 to 327 (YLLF…VLNI). Residues 328–468 (HYRTPTTHTM…WKYVAMVIDR (141 aa)) lie on the Cytoplasmic side of the membrane. Residues 364 to 390 (KNISKKTKKGSAKTSGKSKHSKHKDNK) are disordered. Residues 366–390 (ISKKTKKGSAKTSGKSKHSKHKDNK) are compositionally biased toward basic residues. Residues 469-489 (VFLWVFIILCVFGTAGLFIQP) form a helical membrane-spanning segment.

This sequence belongs to the ligand-gated ion channel (TC 1.A.9) family. Acetylcholine receptor (TC 1.A.9.1) subfamily. Alpha-6/CHRNA6 sub-subfamily. As to quaternary structure, neuronal AChR is composed of two different types of subunits: alpha and non-alpha (beta). CHRNA6/alpha-6 subunit can be combined to CHRNB2/beta-2, CHRNA4/alpha-4 and CHRNB3/beta-3 to give rise to functional receptors. Heteropentamers containing CHRNB3 have an stoichiometry of (CHRNA6:CHRNB2)2:CHRNB3. Interacts with LYPD6.

It is found in the synaptic cell membrane. The catalysed reaction is K(+)(in) = K(+)(out). The enzyme catalyses Na(+)(in) = Na(+)(out). It carries out the reaction Ca(2+)(in) = Ca(2+)(out). Its activity is regulated as follows. Activated by a myriad of ligands such as acetylcholine, cytisine and nicotine. CHRNA6 nAChR activity is inhibited by the antagonists alpha-conotoxin MII and PIA, a small disulfide-constrained peptides from cone snails. Functionally, component of neuronal acetylcholine receptors (nAChRs) that function as pentameric, ligand-gated cation channels with high calcium permeability among other activities. nAChRs are excitatory neurotrasnmitter receptors formed by a collection of nAChR subunits known to mediate synaptic transmission in the nervous system and the neuromuscular junction. Each nAchR subunit confers differential attributes to channel properties, including activation, deactivation and desensitization kinetics, pH sensitivity, cation permeability, and binding to allosteric modulators. CHRNA6 forms pentameric channels with CHRNB2 and CHRNA4 that exhibit high sensitivity to ACh and nicotine and are predominantly expressed in only a few brain areas, including dopaminergic neurons, norepirephrine neurons and cells of the visual system. nAChrs containing CHRNA6 subunits mediate endogenous cholinergic modulation of dopamine and gamma-aminobutyric acid (GABA) release in response to nicotine at nerve terminals. In terms of biological role, component of neuronal acetylcholine receptors (nAChRs) that function as pentameric, ligand-gated cation channels with high calcium permeability among other activities. nAChRs are excitatory neurotrasnmitter receptors formed by a collection of nAChR subunits known to mediate synaptic transmission in the nervous system and the neuromuscular junction. Each nAchR subunit confers differential attributes to channel properties, including activation, deactivation and desensitization kinetics, pH sensitivity, cation permeability, and binding to allosteric modulators. CHRNA6 forms pentameric channels with CHRNB2, CHRNB3 and CHRNA4 that exhibit high sensitivity to ACh and nicotine and are predominantly expressed in only a few brain areas, including dopaminergic neurons, norepirephrine neurons and cells of the visual system. nAChrs containing CHRNA6 subunits mediate endogenous cholinergic modulation of dopamine and gamma-aminobutyric acid (GABA) release in response to nicotine at nerve terminals. In Gallus gallus (Chicken), this protein is Neuronal acetylcholine receptor subunit alpha-6 (CHRNA6).